A 34-amino-acid polypeptide reads, in one-letter code: MINWQVIGQLIATGAIMLAGPAVIVLLALKKGNL.

A helical membrane pass occupies residues 6–26 (VIGQLIATGAIMLAGPAVIVL).

This sequence belongs to the Psb30/Ycf12 family. As to quaternary structure, PSII is composed of 1 copy each of membrane proteins PsbA, PsbB, PsbC, PsbD, PsbE, PsbF, PsbH, PsbI, PsbJ, PsbK, PsbL, PsbM, PsbT, PsbX, PsbY, PsbZ, Psb30/Ycf12, peripheral proteins of the oxygen-evolving complex and a large number of cofactors. It forms dimeric complexes.

Its subcellular location is the plastid. The protein resides in the chloroplast thylakoid membrane. Functionally, a core subunit of photosystem II (PSII), probably helps stabilize the reaction center. This Trieres chinensis (Marine centric diatom) protein is Photosystem II reaction center protein Psb30.